A 166-amino-acid chain; its full sequence is Peptidoglycan-associated lipoprotein (166 aa).

An N-terminal signal peptide occupies residues 1-21 (MEMLKFGKFAALALAMAVAVG). Residue cysteine 22 is the site of N-palmitoyl cysteine attachment. Residue cysteine 22 is the site of S-diacylglycerol cysteine attachment. The 113-residue stretch at 54 to 166 (SEEAALRAIT…AQNRRVELRK (113 aa)) folds into the OmpA-like domain. The tract at residues 147 to 166 (VATGNDEQSWAQNRRVELRK) is disordered.

This sequence belongs to the Pal lipoprotein family. As to quaternary structure, the Tol-Pal system is composed of five core proteins: the inner membrane proteins TolA, TolQ and TolR, the periplasmic protein TolB and the outer membrane protein Pal. They form a network linking the inner and outer membranes and the peptidoglycan layer.

Its subcellular location is the cell outer membrane. Its function is as follows. Part of the Tol-Pal system, which plays a role in outer membrane invagination during cell division and is important for maintaining outer membrane integrity. The sequence is that of Peptidoglycan-associated lipoprotein from Pseudomonas putida (Arthrobacter siderocapsulatus).